We begin with the raw amino-acid sequence, 300 residues long: Ornithine carbamoyltransferase (300 aa).

Residues 49–52, Q76, R100, and 127–130 contribute to the carbamoyl phosphate site; these read STRT and HPCQ. Residues N158, D218, and 222–223 contribute to the L-ornithine site; that span reads SM. Residues 258–259 and R286 each bind carbamoyl phosphate; that span reads CL.

It belongs to the aspartate/ornithine carbamoyltransferase superfamily. OTCase family.

Its subcellular location is the cytoplasm. It carries out the reaction carbamoyl phosphate + L-ornithine = L-citrulline + phosphate + H(+). It participates in amino-acid biosynthesis; L-arginine biosynthesis; L-arginine from L-ornithine and carbamoyl phosphate: step 1/3. Functionally, reversibly catalyzes the transfer of the carbamoyl group from carbamoyl phosphate (CP) to the N(epsilon) atom of ornithine (ORN) to produce L-citrulline. The polypeptide is Ornithine carbamoyltransferase (Nitratidesulfovibrio vulgaris (strain ATCC 29579 / DSM 644 / CCUG 34227 / NCIMB 8303 / VKM B-1760 / Hildenborough) (Desulfovibrio vulgaris)).